The primary structure comprises 295 residues: Taste receptor type 2 member 120 (295 aa).

At Met-1–Glu-5 the chain is on the extracellular side. A helical membrane pass occupies residues Trp-6–Ile-26. Residues Thr-27–Arg-45 lie on the Cytoplasmic side of the membrane. Residues Ile-46–His-66 form a helical membrane-spanning segment. Residues Ser-67 to Arg-80 lie on the Extracellular side of the membrane. Residues Val-81–Leu-101 traverse the membrane as a helical segment. The Cytoplasmic portion of the chain corresponds to Ser-102–Val-127. A helical transmembrane segment spans residues Leu-128–Ile-148. Over Lys-149 to Leu-177 the chain is Extracellular. N-linked (GlcNAc...) asparagine glycosylation is present at Asn-160. Residues Leu-178–Ile-198 traverse the membrane as a helical segment. Over Tyr-199–Gln-228 the chain is Cytoplasmic. Residues Thr-229 to Trp-249 form a helical membrane-spanning segment. Residues Ser-250–Pro-255 lie on the Extracellular side of the membrane. Residues Val-256 to Ile-276 traverse the membrane as a helical segment. Residues Trp-277 to Cys-295 are Cytoplasmic-facing.

Belongs to the G-protein coupled receptor T2R family.

Its subcellular location is the membrane. Functionally, putative taste receptor which may play a role in the perception of bitterness. This chain is Taste receptor type 2 member 120, found in Mus musculus (Mouse).